The primary structure comprises 393 residues: S-adenosylmethionine synthase 1 (393 aa).

E9 contributes to the Mg(2+) binding site. H15 serves as a coordination point for ATP. E43 contacts K(+). L-methionine-binding residues include E56 and Q99. ATP-binding positions include 167 to 169 (DGK), 235 to 238 (SGRF), D246, 252 to 253 (RK), A269, K273, and K277. L-methionine is bound at residue D246. Residue K277 participates in L-methionine binding.

This sequence belongs to the AdoMet synthase family. Homotetramer. Mn(2+) is required as a cofactor. The cofactor is Mg(2+). Co(2+) serves as cofactor. It depends on K(+) as a cofactor.

The protein resides in the cytoplasm. The enzyme catalyses L-methionine + ATP + H2O = S-adenosyl-L-methionine + phosphate + diphosphate. It participates in amino-acid biosynthesis; S-adenosyl-L-methionine biosynthesis; S-adenosyl-L-methionine from L-methionine: step 1/1. In terms of biological role, catalyzes the formation of S-adenosylmethionine from methionine and ATP. The reaction comprises two steps that are both catalyzed by the same enzyme: formation of S-adenosylmethionine (AdoMet) and triphosphate, and subsequent hydrolysis of the triphosphate. This is S-adenosylmethionine synthase 1 (METK1) from Solanum tuberosum (Potato).